Reading from the N-terminus, the 205-residue chain is Holliday junction branch migration complex subunit RuvA (205 aa).

The segment at 1-64 (MIGRLRGIIL…EDAQLLFGFN (64 aa)) is domain I. Positions 65–143 (DKQERALFRE…GLSGDLFNSV (79 aa)) are domain II. A flexible linker region spans residues 144–156 (SDIPLTSPANVDN). Residues 157–205 (RVGEPEAEAAAALVALGYKPQEASRMISKIARPDADCETLIRDALRAAL) form a domain III region.

This sequence belongs to the RuvA family. In terms of assembly, homotetramer. Forms an RuvA(8)-RuvB(12)-Holliday junction (HJ) complex. HJ DNA is sandwiched between 2 RuvA tetramers; dsDNA enters through RuvA and exits via RuvB. An RuvB hexamer assembles on each DNA strand where it exits the tetramer. Each RuvB hexamer is contacted by two RuvA subunits (via domain III) on 2 adjacent RuvB subunits; this complex drives branch migration. In the full resolvosome a probable DNA-RuvA(4)-RuvB(12)-RuvC(2) complex forms which resolves the HJ.

The protein localises to the cytoplasm. In terms of biological role, the RuvA-RuvB-RuvC complex processes Holliday junction (HJ) DNA during genetic recombination and DNA repair, while the RuvA-RuvB complex plays an important role in the rescue of blocked DNA replication forks via replication fork reversal (RFR). RuvA specifically binds to HJ cruciform DNA, conferring on it an open structure. The RuvB hexamer acts as an ATP-dependent pump, pulling dsDNA into and through the RuvAB complex. HJ branch migration allows RuvC to scan DNA until it finds its consensus sequence, where it cleaves and resolves the cruciform DNA. This is Holliday junction branch migration complex subunit RuvA from Pectobacterium atrosepticum (strain SCRI 1043 / ATCC BAA-672) (Erwinia carotovora subsp. atroseptica).